We begin with the raw amino-acid sequence, 370 residues long: Doublesex- and mab-3-related transcription factor C2 (370 aa).

The disordered stretch occupies residues methionine 1 to arginine 38. The DM DNA-binding region spans cysteine 42–arginine 89. The segment at alanine 334–valine 356 is disordered.

The protein belongs to the DMRT family. As to expression, expressed in testis. Highly expressed in ovary.

Its subcellular location is the nucleus. Functionally, may be involved in sexual development. The chain is Doublesex- and mab-3-related transcription factor C2 (Dmrtc2) from Mus musculus (Mouse).